Here is a 329-residue protein sequence, read N- to C-terminus: Phenylalanine--tRNA ligase alpha subunit (329 aa).

E254 lines the Mg(2+) pocket.

This sequence belongs to the class-II aminoacyl-tRNA synthetase family. Phe-tRNA synthetase alpha subunit type 1 subfamily. Tetramer of two alpha and two beta subunits. Mg(2+) serves as cofactor.

The protein localises to the cytoplasm. The catalysed reaction is tRNA(Phe) + L-phenylalanine + ATP = L-phenylalanyl-tRNA(Phe) + AMP + diphosphate + H(+). In Mannheimia succiniciproducens (strain KCTC 0769BP / MBEL55E), this protein is Phenylalanine--tRNA ligase alpha subunit.